Here is a 227-residue protein sequence, read N- to C-terminus: Cytidylate kinase (227 aa).

Residue 12–20 participates in ATP binding; sequence GPSGAGKGT.

This sequence belongs to the cytidylate kinase family. Type 1 subfamily.

The protein localises to the cytoplasm. It catalyses the reaction CMP + ATP = CDP + ADP. The enzyme catalyses dCMP + ATP = dCDP + ADP. This chain is Cytidylate kinase, found in Shigella boydii serotype 4 (strain Sb227).